Here is a 304-residue protein sequence, read N- to C-terminus: Calcium release-activated calcium channel protein 1 (304 aa).

Residues 1–11 show a composition bias toward pro residues; it reads MHPEPAPPPNN. A disordered region spans residues 1 to 49; it reads MHPEPAPPPNNSNPELPLSGGSSTSGSRRSRRRSGDGEPTGAPPLPPPP. At 1-88 the chain is on the cytoplasmic side; the sequence is MHPEPAPPPN…KLYLSRAKLK (88 aa). Residues 3-49 form a required for generation of inwardly rectifying CRAC currents region; it reads PEPAPPPNNSNPELPLSGGSSTSGSRRSRRRSGDGEPTGAPPLPPPP. Residues 12–27 are compositionally biased toward low complexity; that stretch reads SNPELPLSGGSSTSGS. Residues 39 to 60 are AKAP5 association region; it reads PTGAPPLPPPPAVSYPDWIGQS. An interaction with STIM1 region spans residues 71–91; it reads SMQALSWRKLYLSRAKLKASS. A helical membrane pass occupies residues 89–106; that stretch reads ASSRTSALLSGFAMVAMV. Residues 107 to 120 are Extracellular-facing; the sequence is EVQLDTDHDYPPGL. Residues 121–141 form a helical membrane-spanning segment; the sequence is LIVFSACTTVLVAVHLFALMI. The Cytoplasmic portion of the chain corresponds to 142–174; sequence STCILPNIEAVSNVHNLNSVKESPHERMHRHIE. A helical membrane pass occupies residues 175–195; that stretch reads LAWAFSTVIGTLLFLAEVVLL. Residues 196-237 lie on the Extracellular side of the membrane; the sequence is CWVKFLPLKRQAGQPSPTKPPTEPAVVVANSSNNGGITPGEA. An N-linked (GlcNAc...) asparagine glycan is attached at asparagine 225. A helical transmembrane segment spans residues 238–258; sequence AAIASTAIMVPCGLVFIVFAV. The Cytoplasmic segment spans residues 259-304; sequence HFYRSLVSHKTDRQFQELNELAEFARLQDQLDHRGDHSLTPGTHYA. Residues 275 to 295 are interaction with STIM1; that stretch reads ELNELAEFARLQDQLDHRGDH. A Phosphothreonine modification is found at threonine 298.

The protein belongs to the Orai family. In terms of assembly, oligomerizes in homomeric and heteromeric ORAI complexes. Native CRAC channels most likely consist of hexameric ORAI heteromers, implying that diverse ORAI1, ORAI2 and ORAI3 subunit combinations with distinct biophysical properties can operate in a cell-type specific way. ARC channels are heteropentamers consisting of three ORAI1 and two ORAI3 subunits. Interacts with STIM1 and STIM2; this regulates channel activity. Interacts with CALM; this may displace STIM1 and STIM2 and might thereby modulate channel activity. Interacts (via N-terminus) with AKAP5 upon store depletion. Interacts with CRACR2A/EFCAB4B; the interaction is direct and takes place in absence of Ca(2+). Forms a complex with CRACR2A/EFCAB4B and STIM1 at low concentration of Ca(2+), the complex dissociates at elevated Ca(2+) concentrations. Interacts with ASPH (isoform 8). Interacts with SLC35G1. Interacts with UBQLN1. Interacts with ADCY8; interaction is calcium store depletion independent; interaction occurs in membrane raft; interaction increases markedly after store depletion; positively regulates SOCE-induced adenylate cyclase activity; contributes to the targeting of ADCY8 to discrete regions of the plasma membrane that are shielded from other calcium events. Interacts with EFHB; the interaction takes place upon Ca(2+)-store depletion. Interacts (via N- and C-termini) with ATP2C2 (via N-terminus); this interaction regulates Ca(2+) influx at the plasma membrane. Interacts with TSPAN18; this interaction regulates ORAI1 exit from the endoplasmic (ER), and/or Golgi, and trafficking to the cell surface. N-glycosylated. N-glycosylation inhibits channel activity in T cells. Post-translationally, ubiquitinated. In terms of processing, cys-195 is oxidated, leading to inactivation of channel activity.

The protein resides in the cell membrane. The protein localises to the basolateral cell membrane. The enzyme catalyses Ca(2+)(in) = Ca(2+)(out). With respect to regulation, oxidation at Cys-196 leads to inactivation of channel activity. Functionally, pore-forming subunit of two major inward rectifying Ca(2+) channels at the plasma membrane: Ca(2+) release-activated Ca(2+) (CRAC) channels and arachidonate-regulated Ca(2+)-selective (ARC) channels. Assembles with ORAI2 and ORAI3 to form hexameric CRAC channels that mediate Ca(2+) influx upon depletion of endoplasmic reticulum Ca(2+) store and channel activation by Ca(2+) sensor STIM1, a process known as store-operated Ca(2+) entry (SOCE). Various pore subunit combinations may account for distinct CRAC channel spatiotemporal and cell-type specific dynamics. ORAI1 mainly contributes to the generation of Ca(2+) plateaus involved in sustained Ca(2+) entry and is dispensable for cytosolic Ca(2+) oscillations, whereas ORAI2 and ORAI3 generate oscillatory patterns. CRAC channels assemble in Ca(2+) signaling microdomains where Ca(2+) influx is coupled to calmodulin and calcineurin signaling and activation of NFAT transcription factors recruited to ORAI1 via AKAP5. Activates NFATC2/NFAT1 and NFATC3/NFAT4-mediated transcriptional responses. CRAC channels are the main pathway for Ca(2+) influx in T cells and promote the immune response to pathogens by activating NFAT-dependent cytokine and chemokine transcription. Assembles with ORAI3 to form channels that mediate store-independent Ca(2+) influx in response to inflammatory metabolites arachidonate or its derivative leukotriene C4, termed ARC and LRC channels respectively. Plays a prominent role in Ca(2+) influx at the basolateral membrane of mammary epithelial cells independently of the Ca(2+) content of endoplasmic reticulum or Golgi stores. May mediate transepithelial transport of large quantities of Ca(2+) for milk secretion. The polypeptide is Calcium release-activated calcium channel protein 1 (Orai1) (Rattus norvegicus (Rat)).